The sequence spans 176 residues: Tubulin polymerization-promoting protein family member 3 (176 aa).

Residue Ala-2 is modified to N-acetylalanine. Residues 132–152 (TGSHKERFDESGKGKGIAGRQ) form a disordered region. Basic and acidic residues predominate over residues 134–144 (SHKERFDESGK).

This sequence belongs to the TPPP family.

It localises to the cytoplasm. Its subcellular location is the cytoskeleton. Regulator of microtubule dynamic that has microtubule bundling activity. Required for embryo implantation; possibly by regulating beta-catenin. Also required for decidualization via regulation of beta-catenin. This Mus musculus (Mouse) protein is Tubulin polymerization-promoting protein family member 3.